Here is a 478-residue protein sequence, read N- to C-terminus: MTKAEFSLVLPEVLLAIYAMGVLLFGVWTGKDRVAKPILWASAVTMLALALIIGLGTGNDTAFGGLFIADGFARFSKVVILVSAAAVLAMSSDYMGRRGLLRFEYPILIVLAVVGMMMMVSAGDLMSLYIGLELQSLALYVVAALRRDSAVSSEAGLKYFVLGSLSSGLLLYGASLVYGFAGTTTFSGIITVVEQGHLPIGLLFGLVFLLAGLAFKVSAVPFHMWTPDVYEGSPTPVTAFFATAPKLAAMALIARVVHDAFGQVPGEWGQILAALALASMYLGAIAGIGQRDIKRLMAYSSISHMGFGLLGLAAGTAAGVESMLLYMTIYIVMNVGTFAFILSMERDGKPVTEIAALNMLSKTDPVKAFALLVLLFSLAGVPPMLGFFAKFAVIKAAIGAGFVWVPVAAVVASVIGAFYYLRIVYFMYFGEKSAPLDGRMPALQFAFLVLAAVAMLGGAINMAGVEGAAQAAAASLVN.

Helical transmembrane passes span 8 to 28 (LVLPEVLLAIYAMGVLLFGVW), 38 to 58 (ILWASAVTMLALALIIGLGTG), 62 to 82 (AFGGLFIADGFARFSKVVILV), 106 to 126 (PILIVLAVVGMMMMVSAGDLM), 160 to 180 (FVLGSLSSGLLLYGASLVYGF), 200 to 220 (IGLLFGLVFLLAGLAFKVSAV), 234 to 254 (PTPVTAFFATAPKLAAMALIA), 268 to 288 (WGQILAALALASMYLGAIAGI), 300 to 320 (SSISHMGFGLLGLAAGTAAGV), 322 to 342 (SMLLYMTIYIVMNVGTFAFIL), 368 to 388 (AFALLVLLFSLAGVPPMLGFF), 398 to 418 (IGAGFVWVPVAAVVASVIGAF), and 445 to 465 (FAFLVLAAVAMLGGAINMAGV).

The protein belongs to the complex I subunit 2 family. In terms of assembly, NDH-1 is composed of 14 different subunits. Subunits NuoA, H, J, K, L, M, N constitute the membrane sector of the complex.

The protein localises to the cellular chromatophore membrane. The enzyme catalyses a quinone + NADH + 5 H(+)(in) = a quinol + NAD(+) + 4 H(+)(out). In terms of biological role, NDH-1 shuttles electrons from NADH, via FMN and iron-sulfur (Fe-S) centers, to quinones in the respiratory chain. The immediate electron acceptor for the enzyme in this species is believed to be ubiquinone. Couples the redox reaction to proton translocation (for every two electrons transferred, four hydrogen ions are translocated across the cytoplasmic membrane), and thus conserves the redox energy in a proton gradient. The protein is NADH-quinone oxidoreductase subunit N of Rhodobacter capsulatus (Rhodopseudomonas capsulata).